The following is a 553-amino-acid chain: Vacuolar fusion protein MON1 homolog B (553 aa).

The residue at position 1 (Met-1) is an N-acetylmethionine. Disordered stretches follow at residues 1–111 and 534–553; these read MEAG…DEDW and STPPSTSADQAPNNGLFTGL. The segment covering 23 to 35 has biased composition (basic and acidic residues); it reads FPREEAGDSERVH. Residues 52-72 are compositionally biased toward polar residues; it reads KDQPSSLLSPLPQTEAASSTC. The residue at position 57 (Ser-57) is a Phosphoserine. Residues 78–95 show a composition bias toward low complexity; that stretch reads AAASDSSPPGEPESNSEG. A compositionally biased stretch (acidic residues) spans 96–108; sequence QGEDPDDGGDPSD. The span at 541 to 553 shows a compositional bias: polar residues; the sequence is ADQAPNNGLFTGL.

It belongs to the MON1/SAND family. Interacts with CCNT2; down-regulates CCNT2-mediated activation of viral promoters during herpes simplex virus 1/HHV-1 infection. Found in a complex with RMC1, CCZ1 MON1A and MON1B.

This Mus musculus (Mouse) protein is Vacuolar fusion protein MON1 homolog B (Mon1b).